The following is a 464-amino-acid chain: Heterogeneous nuclear ribonucleoprotein K (464 aa).

Residue methionine 1 is modified to N-acetylmethionine. Residues 1–37 (METEQPEETFPNTETNGEFGKRPAEDMEEEQAFKRSR) are disordered. The tract at residues 1–276 (METEQPEETF…GRGGRPMPPS (276 aa)) is necessary for interaction with DDX1. Residues 19-37 (FGKRPAEDMEEEQAFKRSR) show a composition bias toward basic and acidic residues. At lysine 34 the chain carries N6-acetyllysine; alternate. Lysine 34 is covalently cross-linked (Glycyl lysine isopeptide (Lys-Gly) (interchain with G-Cter in SUMO1); alternate). Lysine 34 is covalently cross-linked (Glycyl lysine isopeptide (Lys-Gly) (interchain with G-Cter in SUMO2); alternate). Serine 36 carries the post-translational modification Phosphoserine. Threonine 39 is modified (phosphothreonine). The KH 1 domain maps to 42–104 (MVELRILLQS…ETIGEILKKI (63 aa)). Residues lysine 52 and lysine 60 each participate in a glycyl lysine isopeptide (Lys-Gly) (interchain with G-Cter in SUMO2) cross-link. 2 tandem repeats follow at residues 54 to 76 (AGAVIGKGGKNIKALRTDYNASV) and 59 to 62 (GKGG). The 2 X 22 AA approximate repeats stretch occupies residues 54-421 (AGAVIGKGGK…QIRHESGASI (368 aa)). The segment at 59–407 (GKGGKNIKAL…LAGSIIGKGG (349 aa)) is 5 X 4 AA repeats of G-X-G-G. Phosphoserine occurs at positions 75 and 116. The KH 2 domain occupies 144–209 (DCELRLLIHQ…DRVVECIKII (66 aa)). Lysine 163 is covalently cross-linked (Glycyl lysine isopeptide (Lys-Gly) (interchain with G-Cter in SUMO1); alternate). Residue lysine 163 forms a Glycyl lysine isopeptide (Lys-Gly) (interchain with G-Cter in SUMO2); alternate linkage. Lysine 198 is subject to N6-acetyllysine. Phosphoserine occurs at positions 214 and 216. Lysine 219 is covalently cross-linked (Glycyl lysine isopeptide (Lys-Gly) (interchain with G-Cter in SUMO2); alternate). Lysine 219 is subject to N6-succinyllysine; alternate. The segment at 236 to 273 (YGGFTMMFDDRRGRPVGFPMRGRGGFDRMPPGRGGRPM) is RNA-binding RGG-box. 3 tandem repeats follow at residues 245–250 (DRRGRP), 257–260 (GRGG), and 267–270 (GRGG). The interval 245-329 (DRRGRPVGFP…LMAYDRRGRP (85 aa)) is 2 X 6 AA approximate repeats. Positions 250–329 (PVGFPMRGRG…LMAYDRRGRP (80 aa)) are disordered. A compositionally biased stretch (low complexity) spans 252-266 (GFPMRGRGGFDRMPP). Residues 276–285 (SRRDYDDMSP) are compositionally biased toward basic and acidic residues. Serine 284 carries the phosphoserine modification. The 3-4 repeat unit spans residues 295-298 (GRGG). At arginine 316 the chain carries Omega-N-methylarginine. The stretch at 324 to 329 (DRRGRP) is one 2-2 repeat. Omega-N-methylarginine is present on arginine 377. A Phosphoserine modification is found at serine 379. Phosphotyrosine is present on tyrosine 380. Residues 387 to 451 (IITTQVTIPK…DQIQNAQYLL (65 aa)) enclose the KH 3 domain. 2 repeat units span residues 399 to 421 (AGSIIGKGGQRIKQIRHESGASI) and 404 to 407 (GKGG). Lysine 405 carries the N6-acetyllysine; alternate modification. A Glycyl lysine isopeptide (Lys-Gly) (interchain with G-Cter in SUMO2); alternate cross-link involves residue lysine 405. Serine 420 bears the Phosphoserine mark. Lysine 422 participates in a covalent cross-link: Glycyl lysine isopeptide (Lys-Gly) (interchain with G-Cter in SUMO1); alternate. A Glycyl lysine isopeptide (Lys-Gly) (interchain with G-Cter in SUMO2); alternate cross-link involves residue lysine 422. Residue lysine 422 forms a Glycyl lysine isopeptide (Lys-Gly) (interchain with G-Cter in SUMO); alternate linkage.

As to quaternary structure, identified in the spliceosome C complex. Interacts with ANKRD28, RBM42 and ZIK1. Interacts with DDX1. Interacts with MDM2; this interaction leads to ubiquitination and proteasomal degradation. Interacts with p53/TP53. Interacts with BRDT. Interacts with IVNS1ABP. Interacts with PPIA/CYPA. Part of a transcription inhibitory ribonucleoprotein complex composed at least of the circular RNA circZNF827, ZNF827 and HNRNPL. Post-translationally, sumoylated by CBX4. Sumoylation is increased upon DNA damage, such as that produced by doxorubicin, etoposide, UV light and camptothecin, due to enhanced CBX4 phosphorylation by HIPK2 under these conditions. In terms of processing, ubiquitinated by MDM2. Doxorubicin treatment does not affect monoubiquitination, but slightly decreases HNRNPK poly-ubiquitination. O-glycosylated (O-GlcNAcylated), in a cell cycle-dependent manner.

It localises to the cytoplasm. The protein localises to the nucleus. The protein resides in the nucleoplasm. Its subcellular location is the cell projection. It is found in the podosome. Its function is as follows. One of the major pre-mRNA-binding proteins. Binds tenaciously to poly(C) sequences. Likely to play a role in the nuclear metabolism of hnRNAs, particularly for pre-mRNAs that contain cytidine-rich sequences. Can also bind poly(C) single-stranded DNA. Plays an important role in p53/TP53 response to DNA damage, acting at the level of both transcription activation and repression. When sumoylated, acts as a transcriptional coactivator of p53/TP53, playing a role in p21/CDKN1A and 14-3-3 sigma/SFN induction. As far as transcription repression is concerned, acts by interacting with long intergenic RNA p21 (lincRNA-p21), a non-coding RNA induced by p53/TP53. This interaction is necessary for the induction of apoptosis, but not cell cycle arrest. As part of a ribonucleoprotein complex composed at least of ZNF827, HNRNPL and the circular RNA circZNF827 that nucleates the complex on chromatin, may negatively regulate the transcription of genes involved in neuronal differentiation. The sequence is that of Heterogeneous nuclear ribonucleoprotein K (HNRNPK) from Macaca fascicularis (Crab-eating macaque).